A 77-amino-acid polypeptide reads, in one-letter code: Defensin-like protein (77 aa).

The signal sequence occupies residues 1 to 30 (MERGMRLFSSLVLVLLLVTATEMGPKVAEA). 4 disulfides stabilise this stretch: Cys-33-Cys-77, Cys-44-Cys-64, Cys-50-Cys-71, and Cys-54-Cys-73.

Belongs to the DEFL family.

It is found in the secreted. In Nelumbo nucifera (Sacred lotus), this protein is Defensin-like protein.